A 313-amino-acid chain; its full sequence is Methionyl-tRNA formyltransferase (313 aa).

109-112 (SLLP) is a (6S)-5,6,7,8-tetrahydrofolate binding site.

The protein belongs to the Fmt family.

The enzyme catalyses L-methionyl-tRNA(fMet) + (6R)-10-formyltetrahydrofolate = N-formyl-L-methionyl-tRNA(fMet) + (6S)-5,6,7,8-tetrahydrofolate + H(+). Functionally, attaches a formyl group to the free amino group of methionyl-tRNA(fMet). The formyl group appears to play a dual role in the initiator identity of N-formylmethionyl-tRNA by promoting its recognition by IF2 and preventing the misappropriation of this tRNA by the elongation apparatus. This Thermotoga maritima (strain ATCC 43589 / DSM 3109 / JCM 10099 / NBRC 100826 / MSB8) protein is Methionyl-tRNA formyltransferase.